A 367-amino-acid polypeptide reads, in one-letter code: Phosphoribosylaminoimidazole-succinocarboxamide synthase (367 aa).

It belongs to the SAICAR synthetase family.

The enzyme catalyses 5-amino-1-(5-phospho-D-ribosyl)imidazole-4-carboxylate + L-aspartate + ATP = (2S)-2-[5-amino-1-(5-phospho-beta-D-ribosyl)imidazole-4-carboxamido]succinate + ADP + phosphate + 2 H(+). The protein operates within purine metabolism; IMP biosynthesis via de novo pathway; 5-amino-1-(5-phospho-D-ribosyl)imidazole-4-carboxamide from 5-amino-1-(5-phospho-D-ribosyl)imidazole-4-carboxylate: step 1/2. This is Phosphoribosylaminoimidazole-succinocarboxamide synthase from Aliivibrio fischeri (strain MJ11) (Vibrio fischeri).